The primary structure comprises 354 residues: MSLSPKHTTPFSVSDILSPIEETYKKFSGAMDGAPPGLGAPLGAAAAYRAPPPGPSSQAATVAGMQPSHAMAGHNAAAAAAAAAAAAAAAATYHMPPGVSQFPHGAMGSYCNGGLGNMGELPAYTDGMRGGAATGWYGANPDPRYSSISRFMGPSAGVNVAGMGSLTGIADAAKSLGPLHAAAAAAAPRRKRRVLFSQAQVYELERRFKQQKYLSAPEREHLASMIHLTPTQVKIWFQNHRYKMKRQAKDKAAQQLQQEGGLGPPPPPPPSPRRVAVPVLVKDGKPCQNGASTPTPGQAGPQPPAPTPAPELEELSPSPPALHGPGGGLAALDAAAGEYSGGVLGANLLYGRTW.

The homeobox DNA-binding region spans 189–248 (RRKRRVLFSQAQVYELERRFKQQKYLSAPEREHLASMIHLTPTQVKIWFQNHRYKMKRQA). Positions 246–329 (RQAKDKAAQQ…PALHGPGGGL (84 aa)) are disordered. Residues 263-272 (GPPPPPPPSP) show a composition bias toward pro residues.

Belongs to the NK-2 homeobox family.

The protein localises to the nucleus. In terms of biological role, probable transcription factor. The polypeptide is Homeobox protein Nkx-2.4 (NKX2-4) (Homo sapiens (Human)).